A 594-amino-acid chain; its full sequence is APOBEC1 complementation factor (594 aa).

3 RRM domains span residues 56–134 (CEIF…ASVD), 136–218 (CRLF…WAEP), and 231–303 (KILY…LAKP). The tract at residues 360–409 (HFPATKGHLSNRAIIRAPSVREIYMNVPVGAAGVRGLGGRGYLAYTGLGR) is required for nuclear localization. At Thr499 the chain carries Phosphothreonine.

Part of the apolipoprotein B mRNA editing complex with APOBEC1. Interacts with TNPO2; TNPO2 may be responsible for transport of A1CF into the nucleus. Interacts with SYNCRIP. Interacts with CELF2/CUGBP2. Interacts with RBM47. As to expression, widely expressed with highest levels in brain, liver, pancreas, colon and spleen.

The protein localises to the nucleus. The protein resides in the endoplasmic reticulum. It localises to the cytoplasm. Essential component of the apolipoprotein B mRNA editing enzyme complex which is responsible for the postranscriptional editing of a CAA codon for Gln to a UAA codon for stop in APOB mRNA. Binds to APOB mRNA and is probably responsible for docking the catalytic subunit, APOBEC1, to the mRNA to allow it to deaminate its target cytosine. The complex also protects the edited APOB mRNA from nonsense-mediated decay. This Homo sapiens (Human) protein is APOBEC1 complementation factor (A1CF).